The primary structure comprises 475 residues: Polyphosphate:AMP phosphotransferase (475 aa).

2 PPK2 regions span residues Leu18 to Leu222 and Ala256 to Arg472.

The protein belongs to the polyphosphate kinase 2 (PPK2) family. Class II subfamily. Homodimer and homotetramer. Mg(2+) serves as cofactor.

It carries out the reaction [phosphate](n) + ADP = [phosphate](n+1) + AMP. Functionally, uses inorganic polyphosphate (polyP) as a donor to convert AMP to ADP. Can also use GMP, UMP, CMP, TMP or deoxyribonucleoside monophosphates, with lower efficiency. Cannot use low-molecular weight polyP as donors. Can also catalyze the synthesis of polyP from ADP or GDP, with lower efficiency. The sequence is that of Polyphosphate:AMP phosphotransferase from Acinetobacter johnsonii.